The sequence spans 269 residues: MSLEQKKGADIISKILQIQNSIGKTTSPSTLKTKLSEISRKEQENARIQSKLSDLQKKKIDIDNKLLKEKQNLIKEEILERKKLEVLTKKQQKDEIEHQKKLKREIDAIKASTQYITDVSISSYNNTIPETEPEYDLFISHASEDKEDFVRPLAETLQQLGVNVWYDEFTLKVGDSLRQKIDSGLRNSKYGTVVLSTDFIKKDWTNYELDGLVAREMNGHKMILPIWHKITKNDVLDYSPNLADKVALNTSVNSIEEIAHQLADVILNR.

Residues 31–99 (LKTKLSEISR…KQQKDEIEHQ (69 aa)) are a coiled coil. Positions 133-266 (PEYDLFISHA…EIAHQLADVI (134 aa)) constitute a TIR domain. Ser-143, Lys-172, and Lys-202 together coordinate NAD(+). Glu-208 is a catalytic residue. Residue Lys-245 coordinates NAD(+).

In terms of assembly, homodimer. In the presence of NAD(+) analog 8-amino-isoquinoline adenine dinucleotide (3AD) forms filaments with 3AD between monomers; conformational changes occur upon 3AD binding.

It catalyses the reaction NAD(+) = 2'cADPR + nicotinamide + H(+). It carries out the reaction NAD(+) + H2O = ADP-D-ribose + nicotinamide + H(+). The enzyme catalyses NADP(+) + H2O = ADP-D-ribose 2'-phosphate + nicotinamide + H(+). Its function is as follows. NAD(+) hydrolase (NADase) that catalyzes cleavage of NAD(+) into ADP-D-ribose (ADPR) and nicotinamide. In addition to ADPR, also generates a cyclization variant of cyclic ADPR (cADPR), termed 2'cADPR (v-cADPR). Cleaves NADP(+), but does not cyclize the product. The protein is 2' cyclic ADP-D-ribose synthase AbTIR of Acinetobacter baumannii (strain 1295743).